The primary structure comprises 236 residues: UPF0257 lipoprotein YnfC (236 aa).

The signal sequence occupies residues 1 to 16 (MKYKLLPCLLAILLTG). A lipid anchor (N-palmitoyl cysteine) is attached at C17. C17 carries the S-diacylglycerol cysteine lipid modification.

Belongs to the UPF0257 family.

Its subcellular location is the cell membrane. This Escherichia coli O45:K1 (strain S88 / ExPEC) protein is UPF0257 lipoprotein YnfC.